Here is a 2697-residue protein sequence, read N- to C-terminus: Target of rapamycin homolog (2697 aa).

A disordered region spans residues 1–25; the sequence is MLQQHGISFQMNADRQNKAATTSNR. HEAT repeat units follow at residues 235 to 272, 649 to 687, 689 to 726, 731 to 768, 815 to 853, 863 to 900, and 1073 to 1110; these read LRVN…IVSQ, QTIY…PFLA, LAQP…LNPA, RLRL…QSPK, KNLK…STAY, SLLD…YTHK, and KYTG…LTHC. The FAT domain maps to 1438-2153; sequence VLGRWAEQTK…IYALTVASRS (716 aa). Disordered regions lie at residues 1945–1981 and 2017–2039; these read TVIS…PQPA and SNSS…PSNS. Pro residues predominate over residues 1969–1981; that stretch reads SPPPPAQKSPQPA. The span at 2030–2039 shows a compositional bias: polar residues; sequence PLSNDSPSNS. One can recognise a PI3K/PI4K catalytic domain in the interval 2332 to 2647; it reads FSSKMNVITS…TTDSIMETIK (316 aa). The segment at 2338-2344 is G-loop; the sequence is VITSKQR. Positions 2512 to 2520 are catalytic loop; it reads GLGDRHPSN. Residues 2532–2557 form an activation loop region; the sequence is HIDFGDCFEVAMLREKFPERVPFRLT. The segment at 2615-2635 is disordered; sequence DPKTRKDTGGRQNMAGAVLPS. Residues 2665–2697 form the FATC domain; the sequence is EPLQVTEQLAMLTEQATSPLNLCQSYIGWCPFW.

It belongs to the PI3/PI4-kinase family. Ubiquitous. Expressed in all major tissues and organs, including the intestine, gonads and hypodermal cells. Expressed in neurons.

It is found in the nucleus. The catalysed reaction is L-seryl-[protein] + ATP = O-phospho-L-seryl-[protein] + ADP + H(+). It catalyses the reaction L-threonyl-[protein] + ATP = O-phospho-L-threonyl-[protein] + ADP + H(+). In terms of biological role, serine/threonine-protein kinase that regulates the mRNA translation machinery, probably by modulating the activity of translation factors such as eIF-4G and eIF-2. It may have some protein kinase activity instead of lipid kinase activity. May play a role in P-granule degradation by autophagy in somatic cells during embryogenesis. Required, during larval development, for the establishment of the proper number of germline progenitors, probably upstream of rsks-1 and ife-1. Required for larval development. May act as a mediator of lifespan regulation by insulin signaling and nutrient sensing. The sequence is that of Target of rapamycin homolog from Caenorhabditis elegans.